Here is a 494-residue protein sequence, read N- to C-terminus: uncharacterized protein (494 aa).

This is an uncharacterized protein from Acanthamoeba polyphaga (Amoeba).